The primary structure comprises 271 residues: Autophagy-related protein 5 (271 aa).

Residue Lys-145 forms a Glycyl lysine isopeptide (Lys-Gly) (interchain with G-Cter in ATG12) linkage.

This sequence belongs to the ATG5 family. As to quaternary structure, conjugated with ATG12. Interacts with ATG10. The ATG5-ATG12 conjugate forms a complex with several units of ATG16. The ATG12-ATG5 conjugate also associates with ATG3. Conjugated to ATG12; which is essential for autophagy. Conjugation with ATG12 involves ATG7 as an E1-like activating enzyme and ATG10 as an E2-like conjugating enzyme.

Its subcellular location is the preautophagosomal structure membrane. Involved in cytoplasm to vacuole transport (Cvt) and autophagic vesicle formation. Autophagy is essential for maintenance of amino acid levels and protein synthesis under nitrogen starvation. Required for selective autophagic degradation of the nucleus (nucleophagy). Also required for mitophagy, which eliminates defective or superfluous mitochondria in order to fulfill cellular energy requirements and prevent excess ROS production. Conjugation with ATG12, through a ubiquitin-like conjugating system involving ATG7 as an E1-like activating enzyme and ATG10 as an E2-like conjugating enzyme, is essential for its function. The ATG12-ATG5 conjugate acts as an E3-like enzyme which is required for lipidation of ATG8 and ATG8 association to the vesicle membranes. ATG12-ATG5 rearranges the ATG3 catalytic center and enhances its E2 activity. This chain is Autophagy-related protein 5, found in Kluyveromyces marxianus (strain DMKU3-1042 / BCC 29191 / NBRC 104275) (Yeast).